Consider the following 353-residue polypeptide: Photosystem II D2 protein (353 aa).

Position 2 is an N-acetylthreonine (T2). T2 is subject to Phosphothreonine. Residues 41-61 traverse the membrane as a helical segment; it reads CAYFAVGGWFTGTTFVTSWYT. H118 is a chlorophyll a binding site. Residues 125–141 traverse the membrane as a helical segment; the sequence is GFMLRQFELARSVQLRP. Positions 130 and 143 each coordinate pheophytin a. The helical transmembrane segment at 153 to 166 threads the bilayer; the sequence is VFVSVFLIYPLGQS. Chlorophyll a is bound at residue H198. Residues 208-228 traverse the membrane as a helical segment; that stretch reads AALLCAIHGATVENTLFEDGD. A plastoquinone-binding residues include H215 and F262. Residue H215 coordinates Fe cation. H269 is a binding site for Fe cation. The helical transmembrane segment at 279 to 295 threads the bilayer; it reads GLWMSALGVVGLALNLR.

Belongs to the reaction center PufL/M/PsbA/D family. PSII is composed of 1 copy each of membrane proteins PsbA, PsbB, PsbC, PsbD, PsbE, PsbF, PsbH, PsbI, PsbJ, PsbK, PsbL, PsbM, PsbT, PsbX, PsbY, PsbZ, Psb30/Ycf12, at least 3 peripheral proteins of the oxygen-evolving complex and a large number of cofactors. It forms dimeric complexes. The cofactor is The D1/D2 heterodimer binds P680, chlorophylls that are the primary electron donor of PSII, and subsequent electron acceptors. It shares a non-heme iron and each subunit binds pheophytin, quinone, additional chlorophylls, carotenoids and lipids. There is also a Cl(-1) ion associated with D1 and D2, which is required for oxygen evolution. The PSII complex binds additional chlorophylls, carotenoids and specific lipids..

The protein localises to the plastid. Its subcellular location is the chloroplast thylakoid membrane. The catalysed reaction is 2 a plastoquinone + 4 hnu + 2 H2O = 2 a plastoquinol + O2. Functionally, photosystem II (PSII) is a light-driven water:plastoquinone oxidoreductase that uses light energy to abstract electrons from H(2)O, generating O(2) and a proton gradient subsequently used for ATP formation. It consists of a core antenna complex that captures photons, and an electron transfer chain that converts photonic excitation into a charge separation. The D1/D2 (PsbA/PsbD) reaction center heterodimer binds P680, the primary electron donor of PSII as well as several subsequent electron acceptors. D2 is needed for assembly of a stable PSII complex. This is Photosystem II D2 protein from Guizotia abyssinica (Niger).